Consider the following 84-residue polypeptide: MLKFVVVICLVIMAITFAEKCGDQECGEGTCCLDYSQQHCSRLGKLYDMCSDPNDKTDSGSHIFFCQCETGLRCDKTSWSCQKG.

Residues 1-18 form the signal peptide; sequence MLKFVVVICLVIMAITFA. Intrachain disulfides connect Cys-21/Cys-32, Cys-26/Cys-40, Cys-31/Cys-66, Cys-50/Cys-74, and Cys-68/Cys-81.

The protein belongs to the MIT-like AcTx family. In terms of tissue distribution, expressed by the venom gland.

It localises to the secreted. This Illawarra wisharti (Illawarra funnel-web spider) protein is U1-hexatoxin-Iw1a.